An 814-amino-acid polypeptide reads, in one-letter code: Protein ADP-ribosyltransferase PARP3 (814 aa).

Basic and acidic residues-rich tracts occupy residues 1–19 (MKVH…EQKG) and 27–48 (EGKL…DDGR). The tract at residues 1-52 (MKVHETRSHAHMSGDEQKGNLRKHKAEGKLPESEQSQKKAKPENDDGRSVNG) is disordered. A PADR1 zinc-binding domain is found at 38–186 (KKAKPENDDG…KRELGSADKP (149 aa)). Residues 105-150 (GALAKCPLCGGTLICDNEKRFVCGGEISEWCSCVFSTKDPPRKEEP) are zinc ribbon. Residues Cys-110, Cys-113, Cys-127, and Cys-137 each coordinate Zn(2+). TPR repeat units lie at residues 182 to 215 (SADK…NGGK) and 277 to 310 (DLSV…YGKR). Residues 187–274 (FVGMMISLMG…EAQPLEAYDV (88 aa)) form the BRCT domain. The region spanning 322 to 422 (GGKIFEKDGL…KKIQKKPHKF (101 aa)) is the WGR domain. A PARP alpha-helical domain is found at 449–568 (HCKLDSFVAN…DINTASRLIG (120 aa)). Residues 577–808 (DPLSDRYKKL…VKYEEKGTEI (232 aa)) enclose the PARP catalytic domain.

The protein belongs to the ARTD/PARP family.

The protein localises to the nucleus. The enzyme catalyses L-aspartyl-[protein] + NAD(+) = 4-O-(ADP-D-ribosyl)-L-aspartyl-[protein] + nicotinamide. The catalysed reaction is L-glutamyl-[protein] + NAD(+) = 5-O-(ADP-D-ribosyl)-L-glutamyl-[protein] + nicotinamide. Its function is as follows. Involved in the base excision repair (BER) pathway, by catalyzing the poly(ADP-ribosyl)ation of a limited number of acceptor proteins involved in chromatin architecture and in DNA metabolism. This modification follows DNA damages and appears as an obligatory step in a detection/signaling pathway leading to the reparation of DNA strand breaks. This Arabidopsis thaliana (Mouse-ear cress) protein is Protein ADP-ribosyltransferase PARP3 (PARP3).